The primary structure comprises 240 residues: Probable transcriptional regulatory protein jhp_0149 (240 aa).

Belongs to the TACO1 family.

It localises to the cytoplasm. The polypeptide is Probable transcriptional regulatory protein jhp_0149 (Helicobacter pylori (strain J99 / ATCC 700824) (Campylobacter pylori J99)).